Here is a 285-residue protein sequence, read N- to C-terminus: Acetyl-coenzyme A carboxylase carboxyl transferase subunit beta (285 aa).

A CoA carboxyltransferase N-terminal domain is found at 22–285 (LWTKCEACGA…HPGVAYAPGV (264 aa)). Positions 26, 29, 45, and 48 each coordinate Zn(2+). A C4-type zinc finger spans residues 26-48 (CEACGAQIYKKEFQENLHVCPKC).

This sequence belongs to the AccD/PCCB family. As to quaternary structure, acetyl-CoA carboxylase is a heterohexamer composed of biotin carboxyl carrier protein (AccB), biotin carboxylase (AccC) and two subunits each of ACCase subunit alpha (AccA) and ACCase subunit beta (AccD). Zn(2+) is required as a cofactor.

Its subcellular location is the cytoplasm. The catalysed reaction is N(6)-carboxybiotinyl-L-lysyl-[protein] + acetyl-CoA = N(6)-biotinyl-L-lysyl-[protein] + malonyl-CoA. It functions in the pathway lipid metabolism; malonyl-CoA biosynthesis; malonyl-CoA from acetyl-CoA: step 1/1. Its function is as follows. Component of the acetyl coenzyme A carboxylase (ACC) complex. Biotin carboxylase (BC) catalyzes the carboxylation of biotin on its carrier protein (BCCP) and then the CO(2) group is transferred by the transcarboxylase to acetyl-CoA to form malonyl-CoA. The sequence is that of Acetyl-coenzyme A carboxylase carboxyl transferase subunit beta from Thermus thermophilus (strain ATCC 27634 / DSM 579 / HB8).